The chain runs to 172 residues: MEYFNVGKIVNTQGLQGEMRVLSVTDFVEERFKKGQVLALFDEKNQFVMDIEIASHRKQKNFDIIKFKGMYHINDIEKYKGFTLKVAEDQLSDLKDGEFYYHEIIGLDVYEGEELIGKIKEILQPGANDVWVVERHGKRDLLLPYIPPVVLEVDLSNQRVQVELMEGLDDED.

One can recognise a PRC barrel domain in the interval 96-168; that stretch reads DGEFYYHEII…RVQVELMEGL (73 aa).

The protein belongs to the RimM family. In terms of assembly, binds ribosomal protein uS19.

The protein resides in the cytoplasm. Its function is as follows. An accessory protein needed during the final step in the assembly of 30S ribosomal subunit, possibly for assembly of the head region. Essential for efficient processing of 16S rRNA. May be needed both before and after RbfA during the maturation of 16S rRNA. It has affinity for free ribosomal 30S subunits but not for 70S ribosomes. The protein is Ribosome maturation factor RimM of Streptococcus agalactiae serotype III (strain NEM316).